The primary structure comprises 694 residues: Elongation factor G (694 aa).

Residues 8 to 287 (EDYRNFGIMA…AVVEFLPAPT (280 aa)) form the tr-type G domain. GTP contacts are provided by residues 17 to 24 (AHIDAGKT), 86 to 90 (DTPGH), and 140 to 143 (NKMD).

This sequence belongs to the TRAFAC class translation factor GTPase superfamily. Classic translation factor GTPase family. EF-G/EF-2 subfamily.

Its subcellular location is the cytoplasm. Functionally, catalyzes the GTP-dependent ribosomal translocation step during translation elongation. During this step, the ribosome changes from the pre-translocational (PRE) to the post-translocational (POST) state as the newly formed A-site-bound peptidyl-tRNA and P-site-bound deacylated tRNA move to the P and E sites, respectively. Catalyzes the coordinated movement of the two tRNA molecules, the mRNA and conformational changes in the ribosome. The sequence is that of Elongation factor G from Brucella anthropi (strain ATCC 49188 / DSM 6882 / CCUG 24695 / JCM 21032 / LMG 3331 / NBRC 15819 / NCTC 12168 / Alc 37) (Ochrobactrum anthropi).